We begin with the raw amino-acid sequence, 549 residues long: OBERON-like protein (549 aa).

The interval 1–56 (MLPPRQQPRPGGLQTSLSLVSPDACGSPNPQERGSTSDQARDSPSESASSRETWPT) is disordered. 2 stretches are compositionally biased toward polar residues: residues 28 to 38 (PNPQERGSTSD) and 45 to 56 (SESASSRETWPT). The PHD-type zinc-finger motif lies at 224–288 (LCMCVICYKF…LFRCHACSRT (65 aa)). Residues 394–520 (VQEAIRKMEA…YLFEKIKLQE (127 aa)) are a coiled coil. The interval 519 to 549 (QESSRASQSSAGGNDPSQMMYSKIQDLIKNM) is disordered. The segment covering 521 to 538 (SSRASQSSAGGNDPSQMM) has biased composition (polar residues).

Self-interacts and probably forms heteromers. Binds to VPg of pea seed borne mosaic virus (PSbMV), turnip mosaic virus (TuMV) and lettuce mosaic virus (LMV), but not with VPg of tobacco etch virus (TEV), cowpea mosaic virus (CPMV), tomato black ring virus (TBRV) and grapevine fan leaf virus (GFLV).

The protein localises to the nucleus. Functionally, required for the maintenance and/or establishment of both the shoot and root meristems, probably by controlling the expression of the meristem genes and of genes required for auxin responses. Involved in the development of the basal pole and in auxin-mediated root and vascular development in the embryo. Confers sensitivity to turnip mosaic virus (TuMV) probably by promoting viral movement and multiplication via interaction with TuMV VPg. This chain is OBERON-like protein (PVIP), found in Nicotiana benthamiana.